A 122-amino-acid chain; its full sequence is uncharacterized protein (122 aa).

The chain crosses the membrane as a helical span at residues 93 to 113 (ILRICIVFLSLKIYTLTLVII).

It is found in the membrane. This is an uncharacterized protein from Saccharomyces cerevisiae (strain ATCC 204508 / S288c) (Baker's yeast).